The chain runs to 368 residues: Phospho-N-acetylmuramoyl-pentapeptide-transferase (368 aa).

9 consecutive transmembrane segments (helical) span residues alanine 30–leucine 50, leucine 72–alanine 92, histidine 98–tyrosine 118, isoleucine 139–leucine 159, leucine 170–serine 190, glycine 201–alanine 221, glycine 238–phenylalanine 258, glutamate 264–isoleucine 286, and lysine 345–leucine 365.

The protein belongs to the glycosyltransferase 4 family. MraY subfamily. It depends on Mg(2+) as a cofactor.

The protein resides in the cell inner membrane. It catalyses the reaction UDP-N-acetyl-alpha-D-muramoyl-L-alanyl-gamma-D-glutamyl-meso-2,6-diaminopimeloyl-D-alanyl-D-alanine + di-trans,octa-cis-undecaprenyl phosphate = di-trans,octa-cis-undecaprenyl diphospho-N-acetyl-alpha-D-muramoyl-L-alanyl-D-glutamyl-meso-2,6-diaminopimeloyl-D-alanyl-D-alanine + UMP. Its pathway is cell wall biogenesis; peptidoglycan biosynthesis. In terms of biological role, catalyzes the initial step of the lipid cycle reactions in the biosynthesis of the cell wall peptidoglycan: transfers peptidoglycan precursor phospho-MurNAc-pentapeptide from UDP-MurNAc-pentapeptide onto the lipid carrier undecaprenyl phosphate, yielding undecaprenyl-pyrophosphoryl-MurNAc-pentapeptide, known as lipid I. This Chlorobium phaeobacteroides (strain DSM 266 / SMG 266 / 2430) protein is Phospho-N-acetylmuramoyl-pentapeptide-transferase.